We begin with the raw amino-acid sequence, 574 residues long: MSRRLIYVLNINRESTHKIQENEIYTYFSHCNIDHTSTELDFVVKNYDLNRRQPVTGYTALHCYLYNNYFTNDVLKILLNHGVDVTMKTSSGRMPVYILLTRCCNISHDVVIDMIDKDKNHLLHRDYSNLLLEYIKSRYMLLKEEDIDENIVSTLLDKGIDPNFKQDGYTALHYYYLCLAHVYKPGECRKPITIKKAKRIISLFIQHGANLNALDNCGNTPFHLYLSIEMCNNIHMTKMLLTFNPNFEICNNHGLTPILCYITSDYIQHDILVMLIHHYETNVGEMPIDERRIIVFEFIKTYSTRPADSITYLMNRFKNIDIYTRYEGKTLLHVACEYNNTHVIDYLIRINGDINALTDNNKHATQLIIDNKENSPYTINCLLYILRYIVDKNVIRSLVDQLPSLPIFDIKSFEKFISYCILLDDTFYNRHVRNRDSKTYRYAFSKYMSFDKYDGIITKCHKETILLKLSTVLDTTLYAVLRCHNSKKLRRYLTELKKYNNDKSFKIYSNIMNERYLNVYYKDMYVSKVYDKLFPVFTDKNCLLTLLPSEIIYEILYMLTINDLYNISYPPTKV.

ANK repeat units follow at residues 56-87 (TGYT…DVTM), 135-164 (IKSR…DPNF), 167-213 (DGYT…NLNA), 217-249 (CGNT…NFEI), 253-285 (HGLT…NVGE), and 327-356 (EGKT…DINA). The F-box domain occupies 541–574 (NCLLTLLPSEIIYEILYMLTINDLYNISYPPTKV).

It belongs to the poxvirinae B18 protein family.

This chain is Ankyrin repeat protein B19, found in Vaccinia virus (strain Western Reserve) (VACV).